A 393-amino-acid chain; its full sequence is Lipid-A-disaccharide synthase (393 aa).

The protein belongs to the LpxB family.

The enzyme catalyses a lipid X + a UDP-2-N,3-O-bis[(3R)-3-hydroxyacyl]-alpha-D-glucosamine = a lipid A disaccharide + UDP + H(+). It functions in the pathway bacterial outer membrane biogenesis; LPS lipid A biosynthesis. Functionally, condensation of UDP-2,3-diacylglucosamine and 2,3-diacylglucosamine-1-phosphate to form lipid A disaccharide, a precursor of lipid A, a phosphorylated glycolipid that anchors the lipopolysaccharide to the outer membrane of the cell. The sequence is that of Lipid-A-disaccharide synthase from Rhodopseudomonas palustris (strain HaA2).